The primary structure comprises 212 residues: Ribosomal RNA small subunit methyltransferase G (212 aa).

Residues glycine 73, phenylalanine 78, 124-125, and arginine 137 contribute to the S-adenosyl-L-methionine site; that span reads IE.

It belongs to the methyltransferase superfamily. RNA methyltransferase RsmG family.

It localises to the cytoplasm. Specifically methylates the N7 position of a guanine in 16S rRNA. The polypeptide is Ribosomal RNA small subunit methyltransferase G (Karelsulcia muelleri (strain GWSS) (Sulcia muelleri)).